Here is a 159-residue protein sequence, read N- to C-terminus: Cyclic pyranopterin monophosphate synthase (159 aa).

Substrate is bound by residues 75-77 (LCH) and 113-114 (ME). The active site involves Asp-128.

It belongs to the MoaC family. In terms of assembly, homohexamer; trimer of dimers.

It carries out the reaction (8S)-3',8-cyclo-7,8-dihydroguanosine 5'-triphosphate = cyclic pyranopterin phosphate + diphosphate. It functions in the pathway cofactor biosynthesis; molybdopterin biosynthesis. In terms of biological role, catalyzes the conversion of (8S)-3',8-cyclo-7,8-dihydroguanosine 5'-triphosphate to cyclic pyranopterin monophosphate (cPMP). The sequence is that of Cyclic pyranopterin monophosphate synthase from Yersinia pseudotuberculosis serotype IB (strain PB1/+).